Reading from the N-terminus, the 141-residue chain is Protein X (141 aa).

The tract at residues 24-52 (QSSGPPFPRPAAGSAASSTSSPSPSDESD) is disordered. The segment covering 33–48 (PAAGSAASSTSSPSPS) has biased composition (low complexity). The segment at 68 to 113 (PCCLVFTCADLRTMDSTVNFVSWHAKRQLGMPSKDLWTPYIKDQLL) is mitochondrial targeting sequence.

This sequence belongs to the orthohepadnavirus protein X family. May form homodimer. May interact with host CEBPA, CFLAR, CREB1, DDB1, E4F1, HBXIP, HSPD1/HSP60, NFKBIA, POLR2E and SMAD4. Interacts with host SMC5-SMC6 complex and induces its degradation. Interacts with host TRPC4AP; leading to prevent ubiquitination of TRPC4AP. Interacts with host PLSCR1; this interaction promotes ubiquitination and degradation of HBx and impairs HBx-mediated cell proliferation. Post-translationally, a fraction may be phosphorylated in insect cells and HepG2 cells, a human hepatoblastoma cell line. Phosphorylated in vitro by host protein kinase C or mitogen-activated protein kinase. N-acetylated in insect cells.

The protein resides in the host cytoplasm. The protein localises to the host nucleus. Its subcellular location is the host mitochondrion. Functionally, multifunctional protein that plays a role in silencing host antiviral defenses and promoting viral transcription. Does not seem to be essential for HBV infection. May be directly involved in development of cirrhosis and liver cancer (hepatocellular carcinoma). Most of cytosolic activities involve modulation of cytosolic calcium. The effect on apoptosis is controversial depending on the cell types in which the studies have been conducted. May induce apoptosis by localizing in mitochondria and causing loss of mitochondrial membrane potential. May also modulate apoptosis by binding host CFLAR, a key regulator of the death-inducing signaling complex (DISC). Promotes viral transcription by using the host E3 ubiquitin ligase DDB1 to target the SMC5-SMC6 complex to proteasomal degradation. This host complex would otherwise bind to viral episomal DNA, and prevents its transcription. Moderately stimulates transcription of many different viral and cellular transcription elements. Promoters and enhancers stimulated by HBx contain DNA binding sites for NF-kappa-B, AP-1, AP-2, c-EBP, ATF/CREB, or the calcium-activated factor NF-AT. The chain is Protein X from Marmota monax (Woodchuck).